Here is a 337-residue protein sequence, read N- to C-terminus: Tetraacyldisaccharide 4'-kinase (337 aa).

Position 56 to 63 (56 to 63 (VAGGAGKT)) interacts with ATP.

Belongs to the LpxK family.

It catalyses the reaction a lipid A disaccharide + ATP = a lipid IVA + ADP + H(+). The protein operates within glycolipid biosynthesis; lipid IV(A) biosynthesis; lipid IV(A) from (3R)-3-hydroxytetradecanoyl-[acyl-carrier-protein] and UDP-N-acetyl-alpha-D-glucosamine: step 6/6. Functionally, transfers the gamma-phosphate of ATP to the 4'-position of a tetraacyldisaccharide 1-phosphate intermediate (termed DS-1-P) to form tetraacyldisaccharide 1,4'-bis-phosphate (lipid IVA). This chain is Tetraacyldisaccharide 4'-kinase, found in Rhodospirillum centenum (strain ATCC 51521 / SW).